Consider the following 302-residue polypeptide: Acetylglutamate kinase (302 aa).

Residues 68–69 (GG), arginine 90, and asparagine 195 each bind substrate.

This sequence belongs to the acetylglutamate kinase family. ArgB subfamily.

It localises to the cytoplasm. It catalyses the reaction N-acetyl-L-glutamate + ATP = N-acetyl-L-glutamyl 5-phosphate + ADP. It functions in the pathway amino-acid biosynthesis; L-arginine biosynthesis; N(2)-acetyl-L-ornithine from L-glutamate: step 2/4. In terms of biological role, catalyzes the ATP-dependent phosphorylation of N-acetyl-L-glutamate. In Marinomonas sp. (strain MWYL1), this protein is Acetylglutamate kinase.